A 194-amino-acid chain; its full sequence is Imidazoleglycerol-phosphate dehydratase (194 aa).

Belongs to the imidazoleglycerol-phosphate dehydratase family.

It localises to the cytoplasm. The catalysed reaction is D-erythro-1-(imidazol-4-yl)glycerol 3-phosphate = 3-(imidazol-4-yl)-2-oxopropyl phosphate + H2O. The protein operates within amino-acid biosynthesis; L-histidine biosynthesis; L-histidine from 5-phospho-alpha-D-ribose 1-diphosphate: step 6/9. The sequence is that of Imidazoleglycerol-phosphate dehydratase from Bacillus cereus (strain B4264).